Consider the following 585-residue polypeptide: MNVFKNFEKKIKKSLELSDIKGKNGEDLNLSKITVDPPRDSSHGHLSTNAAMVLAKSIGLNPHALAEKIIELLKNDSSIDCIDIAAPGFINIKLTKSFWQDAIKSMLKKGTSYGRIPMGQGKRINVEYVSANPTGPMHVGHCRGAVFGDVLSNLLQFVGYNITKEYYINDAGKQIEVLAHSVLLRYREALGQKINEIPEGLYPGEYLIPLGQSLAQEFSDQLLTIDKDEALSIVKERAIYAMMSMIRKDLAALNIYHDIFFSERMLYADNARAIRNTINDLTLNGYIYKGELPPPKGQNTEDWEPREQTLFRSTDVGDDQDRVLVKSDGSYTYFAADVAYFRDKFNRHFDEMIYILGADHAGYVKRLEAMAKAISGNSAKLSVFLCQLVKLFRNGHPVRMSKRAGSFVTLRDVVEEVGRDPVRFMMLYRKCEAPLDFDFAKVTEQSKDNPIFYVQYASARCHSVFRQAQEIFRIENVSNDTMIAHLNRLTDDNEIFLIRKLSEYPRIIEQAVVHKEPHRLAFYLYDLASSFHAHWNKGSDNFDLRFIQPDDKELSFARLGLIQAIMNILSSGLAIVGIEAATEMR.

Residues 131-141 (ANPTGPMHVGH) carry the 'HIGH' region motif.

This sequence belongs to the class-I aminoacyl-tRNA synthetase family. In terms of assembly, monomer.

Its subcellular location is the cytoplasm. The catalysed reaction is tRNA(Arg) + L-arginine + ATP = L-arginyl-tRNA(Arg) + AMP + diphosphate. This Bartonella quintana (strain Toulouse) (Rochalimaea quintana) protein is Arginine--tRNA ligase.